Here is a 125-residue protein sequence, read N- to C-terminus: Small ribosomal subunit protein uS12m (125 aa).

The segment at 1-26 (MPTINQLLRKKSSRQAPKLKSKKPAL) is disordered. A compositionally biased stretch (basic residues) spans 8–23 (LRKKSSRQAPKLKSKK).

The protein belongs to the universal ribosomal protein uS12 family.

It is found in the mitochondrion. This Prototheca wickerhamii protein is Small ribosomal subunit protein uS12m (RPS12).